Here is a 112-residue protein sequence, read N- to C-terminus: UPF0060 membrane protein CMS0846 (112 aa).

A run of 4 helical transmembrane segments spans residues 6-26 (VILFALAAVAEIGGAWLIWQA), 32-52 (PFWWAGLGVMALGAYGFIATL), 61-81 (ILAAYGGVFVAGSLLWGTVVD), and 87-107 (RWDVIGAVVCLVGVAVIMAAP).

The protein belongs to the UPF0060 family.

It is found in the cell membrane. The polypeptide is UPF0060 membrane protein CMS0846 (Clavibacter sepedonicus (Clavibacter michiganensis subsp. sepedonicus)).